Consider the following 134-residue polypeptide: Large ribosomal subunit protein uL16c (134 aa).

The protein belongs to the universal ribosomal protein uL16 family. As to quaternary structure, part of the 50S ribosomal subunit.

Its subcellular location is the plastid. The protein localises to the chloroplast. This chain is Large ribosomal subunit protein uL16c, found in Atropa belladonna (Belladonna).